The following is a 741-amino-acid chain: Polyribonucleotide nucleotidyltransferase (741 aa).

Mg(2+) is bound by residues D489 and D495. Residues 556 to 615 (PKIDSIQIPVDKIKVVIGKGGETIDKIIAETGVTIDIDEEGLVQIFSSDQDAIDRAKTII) form the KH domain. The region spanning 625-693 (GEVYTVPVVR…EKGRVDASIK (69 aa)) is the S1 motif domain. Positions 695 to 741 (LLPKPEKNEDGENGEEHRHCCCSHHKPDHHNESVEAPKKSDESETKE) are disordered. Basic and acidic residues-rich tracts occupy residues 698 to 713 (KPEK…EHRH) and 723 to 741 (HHNE…ETKE).

This sequence belongs to the polyribonucleotide nucleotidyltransferase family. Mg(2+) serves as cofactor.

It is found in the cytoplasm. It carries out the reaction RNA(n+1) + phosphate = RNA(n) + a ribonucleoside 5'-diphosphate. In terms of biological role, involved in mRNA degradation. Catalyzes the phosphorolysis of single-stranded polyribonucleotides processively in the 3'- to 5'-direction. This Streptococcus thermophilus (strain CNRZ 1066) protein is Polyribonucleotide nucleotidyltransferase.